The chain runs to 466 residues: MAKTLYEKLFDAHVVYEAENETPLLYIDRHLVHEVTSPQAFDGLRAHGRPVRQPGKTFATMDHNVSTQTKDINACGEMARIQMQELIKNCKEFGVELYDLNHPYQGIVHVMGPEQGVTLPGMTIVCGDSHTATHGAFGALAFGIGTSEVEHVLATQTLKQGRAKTMKIEVQGKAAPGITAKDIVLAIIGKTGSAGGTGHVVEFCGEAIRDLSMEGRMTLCNMAIEMGAKAGLVAPDETTFNYVKGRLHAPKGKDFDDAVAYWKTLQTDEGATFDTVVTLQAEEISPQVTWGTNPGQVISVNDNIPDPASFADPVERASAEKALAYMGLKPGIPLIEVAIDKVFIGSCTNSRIEDLRAAAEIAKGRKVAPGVQALVVPGSGPVKAQAEAEGLDKIFIEAGFEWRLPGCSMCLAMNNDRLNPGERCASTSNRNFEGRQGRGGRTHLVSPAMAAAAAVTGHFADIRNIK.

Cys-347, Cys-407, and Cys-410 together coordinate [4Fe-4S] cluster.

Belongs to the aconitase/IPM isomerase family. LeuC type 1 subfamily. As to quaternary structure, heterodimer of LeuC and LeuD. Requires [4Fe-4S] cluster as cofactor.

The enzyme catalyses (2R,3S)-3-isopropylmalate = (2S)-2-isopropylmalate. It participates in amino-acid biosynthesis; L-leucine biosynthesis; L-leucine from 3-methyl-2-oxobutanoate: step 2/4. Its function is as follows. Catalyzes the isomerization between 2-isopropylmalate and 3-isopropylmalate, via the formation of 2-isopropylmaleate. The protein is 3-isopropylmalate dehydratase large subunit of Shigella flexneri serotype 5b (strain 8401).